A 362-amino-acid polypeptide reads, in one-letter code: Uracil-DNA glycosylase (362 aa).

The disordered stretch occupies residues 28 to 97 (ASVAPNDPTE…AGPTEDPNFA (70 aa)). Catalysis depends on Asp-205, which acts as the Proton acceptor.

This sequence belongs to the uracil-DNA glycosylase (UDG) superfamily. UNG family.

It localises to the host nucleus. The catalysed reaction is Hydrolyzes single-stranded DNA or mismatched double-stranded DNA and polynucleotides, releasing free uracil.. Functionally, excises uracil residues from the DNA which can arise as a result of misincorporation of dUMP residues by DNA polymerase or deamination of cytosines. Therefore may reduce deleterious uracil incorporation into the viral genome, particularly in terminally differentiated cells which lack DNA repair enzymes. This Psittacid herpesvirus 1 (isolate Amazon parrot/-/97-0001/1997) (PsHV-1) protein is Uracil-DNA glycosylase (UL2).